The chain runs to 371 residues: DNA replication and repair protein RecF (371 aa).

Position 30–37 (Gly-30–Thr-37) interacts with ATP.

This sequence belongs to the RecF family.

It is found in the cytoplasm. In terms of biological role, the RecF protein is involved in DNA metabolism; it is required for DNA replication and normal SOS inducibility. RecF binds preferentially to single-stranded, linear DNA. It also seems to bind ATP. The polypeptide is DNA replication and repair protein RecF (Lacticaseibacillus casei (strain BL23) (Lactobacillus casei)).